The primary structure comprises 504 residues: MTHTNGFDALHAHAQRLRGAAIPALLAAEPQRPTQYARQVGPLYFNFARQKYDRAALDALFAIARERDLAGAFQRLFRGEQVNVTEQRAALHTALRGDLTDAPVASDAYATAAEVRQRVGALIQQLEGTDVTDIVSVGIGGSDLGPRLVADALRAPSGARFRVHFVSNVDGAAMQRTLATLDPARTAGILISKTFGTQETLLNGSILHAWLGGSERLYAVSANPERAAKAFDIAPGRVLPMWDWVGGRYSLWSAVGFPIALAIGFERFEQLLDGAAQFDAHVLNTPLEENVAVLHGLTAVWNRNLLGSATHAVMTYDQRLALLPAYLQQLVMESLGKRVKLDGAAVDSDTVAVWWGGAGTDVQHSFFQALHQGTSVVPADFIGTVHNDDPYAENHVALMANVLAQTEALANGQDSSDPHRSYPGGRPSTVILLDALTPQALGALISMYEHSVYVQSVMWGINAFDQFGVELGKQLASQLLPALKGEAADVADPVTRELLAKLRG.

Residue glutamate 333 is the Proton donor of the active site. Catalysis depends on residues histidine 364 and lysine 473.

This sequence belongs to the GPI family.

It localises to the cytoplasm. It catalyses the reaction alpha-D-glucose 6-phosphate = beta-D-fructose 6-phosphate. The protein operates within carbohydrate biosynthesis; gluconeogenesis. It functions in the pathway carbohydrate degradation; glycolysis; D-glyceraldehyde 3-phosphate and glycerone phosphate from D-glucose: step 2/4. Its function is as follows. Catalyzes the reversible isomerization of glucose-6-phosphate to fructose-6-phosphate. The polypeptide is Glucose-6-phosphate isomerase (Xanthomonas campestris pv. campestris (strain B100)).